The primary structure comprises 238 residues: MKLTPKELDKLMLHYAGELAKKRKEKGIKLNYVEAVALISAHIMEEARAGKKTAAELMQEGRTLLKPDDVMDGVASMIHEVGIEAMFPDGTKLVTVHTPIEANGKLVPGELFLKNEDITINEGKKAVSVKVKNVGDRPVQIGSHFHFFEVNRCLDFDREKTFGKRLDIASGTAVRFEPGEEKSVELIDIGGNRRIFGFNALVDRQADNESKKIALHRAKERGFHGAKSDDNYVKTIKE.

A urease gamma region spans residues Met-1–Ala-102. Positions Asn-103–Glu-238 are urease beta.

It in the N-terminal section; belongs to the urease gamma subunit family. In the C-terminal section; belongs to the urease beta subunit family. As to quaternary structure, heterohexamer of 3 UreA (alpha) and 3 UreB (beta) subunits.

It localises to the cytoplasm. The catalysed reaction is urea + 2 H2O + H(+) = hydrogencarbonate + 2 NH4(+). It participates in nitrogen metabolism; urea degradation; CO(2) and NH(3) from urea (urease route): step 1/1. The sequence is that of Urease subunit alpha from Helicobacter pylori (strain P12).